We begin with the raw amino-acid sequence, 122 residues long: Basic phospholipase A2 (122 aa).

7 disulfide bridges follow: cysteine 26/cysteine 115, cysteine 28/cysteine 44, cysteine 43/cysteine 95, cysteine 49/cysteine 122, cysteine 50/cysteine 88, cysteine 57/cysteine 81, and cysteine 75/cysteine 86. Residues tyrosine 27, glycine 29, and glycine 31 each contribute to the Ca(2+) site. The active site involves histidine 47. A Ca(2+)-binding site is contributed by aspartate 48. Aspartate 89 is an active-site residue.

This sequence belongs to the phospholipase A2 family. Group II subfamily. D49 sub-subfamily. Ca(2+) serves as cofactor. Expressed by the venom gland.

It localises to the secreted. It catalyses the reaction a 1,2-diacyl-sn-glycero-3-phosphocholine + H2O = a 1-acyl-sn-glycero-3-phosphocholine + a fatty acid + H(+). Its function is as follows. Snake venom phospholipase A2 (PLA2) that does not inhibit platelet aggregation. Exhibits cytotoxic and anticoagulant activity. Induces Ehrlich tumor growth but not angiogenesis. PLA2 catalyzes the calcium-dependent hydrolysis of the 2-acyl groups in 3-sn-phosphoglycerides. The chain is Basic phospholipase A2 from Bothrops leucurus (Whitetail lancehead).